The chain runs to 268 residues: Interleukin-2 receptor subunit alpha (268 aa).

Positions 1 to 21 are cleaved as a signal peptide; the sequence is MEPCLLMWGILTFITVSGYTT. Residues 22-81 form the Sushi 1 domain; it reads DLCDDDPPNLKHATFKALTYKTGTVLNCDCERGFRRISSYMHCTGNSSHASWENKCRCKS. The Extracellular segment spans residues 22-237; sequence DLCDDDPPNL…ESFIFTTEYQ (216 aa). 3 cysteine pairs are disulfide-bonded: Cys-24–Cys-64, Cys-49–Cys-77, and Cys-51–Cys-79. N-linked (GlcNAc...) asparagine glycosylation is present at Asn-67. Residues 83 to 112 form a disordered region; sequence SPENRKGKVTTKPEEQKGENPTEMQSQTPP. Residues 85–102 are compositionally biased toward basic and acidic residues; it reads ENRKGKVTTKPEEQKGEN. Residues 120-183 enclose the Sushi 2 domain; the sequence is GHCREPPPWE…WTQPPLKCIS (64 aa). 2 cysteine pairs are disulfide-bonded: Cys-122-Cys-165 and Cys-149-Cys-181. Residues 186–213 form a disordered region; that stretch reads QFPDDEELQASTDAPAGRDTSSPFITTS. Over residues 204 to 213 the composition is skewed to polar residues; the sequence is DTSSPFITTS. A helical membrane pass occupies residues 238–258; sequence IAVASCVLLLISIVLLSGLTW. Topologically, residues 259 to 268 are cytoplasmic; that stretch reads QRRRRKSRTI.

As to quaternary structure, non-covalent dimer of an alpha and a beta subunit. IL2R exists in 3 different forms: a high affinity dimer, an intermediate affinity monomer (beta subunit), and a low affinity monomer (alpha subunit). The high and intermediate affinity forms also associate with a gamma subunit.

The protein localises to the membrane. In terms of biological role, receptor for interleukin-2. The receptor is involved in the regulation of immune tolerance by controlling regulatory T cells (TREGs) activity. TREGs suppress the activation and expansion of autoreactive T-cells. In Canis lupus familiaris (Dog), this protein is Interleukin-2 receptor subunit alpha (IL2RA).